A 271-amino-acid chain; its full sequence is Phosphatidylglycerol--prolipoprotein diacylglyceryl transferase (271 aa).

Helical transmembrane passes span Trp-25–Val-45, Tyr-60–Tyr-80, Phe-103–Leu-123, Trp-134–Gly-154, Pro-181–Ala-201, Gly-209–Tyr-229, and Gly-235–Ile-255. A 1,2-diacyl-sn-glycero-3-phospho-(1'-sn-glycerol) is bound at residue Arg-152.

This sequence belongs to the Lgt family.

The protein resides in the cell inner membrane. It carries out the reaction L-cysteinyl-[prolipoprotein] + a 1,2-diacyl-sn-glycero-3-phospho-(1'-sn-glycerol) = an S-1,2-diacyl-sn-glyceryl-L-cysteinyl-[prolipoprotein] + sn-glycerol 1-phosphate + H(+). It functions in the pathway protein modification; lipoprotein biosynthesis (diacylglyceryl transfer). In terms of biological role, catalyzes the transfer of the diacylglyceryl group from phosphatidylglycerol to the sulfhydryl group of the N-terminal cysteine of a prolipoprotein, the first step in the formation of mature lipoproteins. This is Phosphatidylglycerol--prolipoprotein diacylglyceryl transferase from Campylobacter jejuni subsp. jejuni serotype O:6 (strain 81116 / NCTC 11828).